Here is a 359-residue protein sequence, read N- to C-terminus: 3-dehydroquinate synthase (359 aa).

Residues 70-75, 104-108, 128-129, lysine 141, and lysine 150 contribute to the NAD(+) site; these read DAEGGK, GAATD, and TT. Zn(2+)-binding residues include glutamate 183, histidine 246, and histidine 262.

It belongs to the sugar phosphate cyclases superfamily. Dehydroquinate synthase family. Requires Co(2+) as cofactor. The cofactor is Zn(2+). NAD(+) is required as a cofactor.

It localises to the cytoplasm. It carries out the reaction 7-phospho-2-dehydro-3-deoxy-D-arabino-heptonate = 3-dehydroquinate + phosphate. The protein operates within metabolic intermediate biosynthesis; chorismate biosynthesis; chorismate from D-erythrose 4-phosphate and phosphoenolpyruvate: step 2/7. Its function is as follows. Catalyzes the conversion of 3-deoxy-D-arabino-heptulosonate 7-phosphate (DAHP) to dehydroquinate (DHQ). The protein is 3-dehydroquinate synthase of Mycolicibacterium vanbaalenii (strain DSM 7251 / JCM 13017 / BCRC 16820 / KCTC 9966 / NRRL B-24157 / PYR-1) (Mycobacterium vanbaalenii).